The following is a 748-amino-acid chain: Rho GTPase-activating protein 24 (748 aa).

Residues 1 to 20 (MEENNDSTENPQQGQGRQNA) are disordered. Residues 7 to 18 (STENPQQGQGRQ) are compositionally biased toward polar residues. A PH domain is found at 19-125 (NAIKCGWLRK…WVKSIRRVIW (107 aa)). Residues 135 to 329 (QKLEDTVRYE…VMISKHDCLF (195 aa)) enclose the Rho-GAP domain. 2 disordered regions span residues 354–476 (TMGQ…GTHS) and 582–641 (DFFG…SSNH). Composition is skewed to polar residues over residues 356–374 (GQLQ…SRQC) and 382–405 (PQRS…SPKN). Phosphoserine is present on residues S369, S391, S396, S398, S402, S413, S415, and S437. The span at 432–476 (IVTNGSFSSSNAEGLEKTQTTPNGSLQARRSSSLKVSGTKMGTHS) shows a compositional bias: polar residues. At T452 the chain carries Phosphothreonine. A compositionally biased stretch (basic and acidic residues) spans 600-615 (DLSHPRDYESKSDHRS). Low complexity predominate over residues 617–641 (GGRSSRATSSSDNSETFVGNSSSNH). Positions 649 to 729 (SSLKQEMTKQ…KEMEQFFSTF (81 aa)) form a coiled coil.

In terms of assembly, interacts with FLNA. Post-translationally, phosphorylated by ROCK, leading to activate the RacGAP activity. In terms of tissue distribution, isoform 1 is widely expressed with a higher level in kidney. Isoform 2 is mainly expressed in endothelial cells.

The protein localises to the cytoplasm. Its subcellular location is the cytoskeleton. It localises to the cell junction. The protein resides in the adherens junction. It is found in the focal adhesion. The protein localises to the cell projection. In terms of biological role, rho GTPase-activating protein involved in cell polarity, cell morphology and cytoskeletal organization. Acts as a GTPase activator for the Rac-type GTPase by converting it to an inactive GDP-bound state. Controls actin remodeling by inactivating Rac downstream of Rho leading to suppress leading edge protrusion and promotes cell retraction to achieve cellular polarity. Able to suppress RAC1 and CDC42 activity in vitro. Overexpression induces cell rounding with partial or complete disruption of actin stress fibers and formation of membrane ruffles, lamellipodia, and filopodia. Isoform 2 is a vascular cell-specific GAP involved in modulation of angiogenesis. This chain is Rho GTPase-activating protein 24 (ARHGAP24), found in Homo sapiens (Human).